The sequence spans 158 residues: MQGRLSAWLVKHGLVHRSLGFDYQGIETLQIKPEDWHSIAVISYVYGYNYLRSQCAYDVAPGGLLASVYHLTRIQYGVDQPEEVCIKVFAPRRNPRIPSVFWIWKSADFQERESYDMLGISYDNHPRLKRILMPESWIGWPLRKDYIAPNFYEIQDAH.

The protein belongs to the complex I 30 kDa subunit family. NDH is composed of at least 16 different subunits, 5 of which are encoded in the nucleus.

It localises to the plastid. Its subcellular location is the chloroplast thylakoid membrane. The catalysed reaction is a plastoquinone + NADH + (n+1) H(+)(in) = a plastoquinol + NAD(+) + n H(+)(out). The enzyme catalyses a plastoquinone + NADPH + (n+1) H(+)(in) = a plastoquinol + NADP(+) + n H(+)(out). In terms of biological role, NDH shuttles electrons from NAD(P)H:plastoquinone, via FMN and iron-sulfur (Fe-S) centers, to quinones in the photosynthetic chain and possibly in a chloroplast respiratory chain. The immediate electron acceptor for the enzyme in this species is believed to be plastoquinone. Couples the redox reaction to proton translocation, and thus conserves the redox energy in a proton gradient. This Nandina domestica (Heavenly bamboo) protein is NAD(P)H-quinone oxidoreductase subunit J, chloroplastic.